We begin with the raw amino-acid sequence, 137 residues long: Small heat shock protein IbpA (137 aa).

Residues 28–137 enclose the sHSP domain; the sequence is SQGNGGYPPY…TLKPRRIEIK (110 aa).

Belongs to the small heat shock protein (HSP20) family. Monomer. Forms homomultimers of about 100-150 subunits at optimal growth temperatures. Conformation changes to monomers at high temperatures or high ionic concentrations.

Its subcellular location is the cytoplasm. Associates with aggregated proteins, together with IbpB, to stabilize and protect them from irreversible denaturation and extensive proteolysis during heat shock and oxidative stress. Aggregated proteins bound to the IbpAB complex are more efficiently refolded and reactivated by the ATP-dependent chaperone systems ClpB and DnaK/DnaJ/GrpE. Its activity is ATP-independent. The polypeptide is Small heat shock protein IbpA (Serratia proteamaculans (strain 568)).